Reading from the N-terminus, the 472-residue chain is 6-phosphogluconate dehydrogenase, decarboxylating (472 aa).

Residues 10–15 (GMAVMG), 33–35 (NRT), 74–76 (VQA), and asparagine 102 contribute to the NADP(+) site. Residues asparagine 102 and 128 to 130 (SGG) each bind substrate. Lysine 184 (proton acceptor) is an active-site residue. A substrate-binding site is contributed by 187–188 (HN). Glutamate 191 serves as the catalytic Proton donor. Positions 192, 262, 289, 447, and 453 each coordinate substrate.

It belongs to the 6-phosphogluconate dehydrogenase family. As to quaternary structure, homodimer.

It carries out the reaction 6-phospho-D-gluconate + NADP(+) = D-ribulose 5-phosphate + CO2 + NADPH. The protein operates within carbohydrate degradation; pentose phosphate pathway; D-ribulose 5-phosphate from D-glucose 6-phosphate (oxidative stage): step 3/3. In terms of biological role, catalyzes the oxidative decarboxylation of 6-phosphogluconate to ribulose 5-phosphate and CO(2), with concomitant reduction of NADP to NADPH. This is 6-phosphogluconate dehydrogenase, decarboxylating (gnd) from Lactococcus lactis subsp. lactis (strain IL1403) (Streptococcus lactis).